A 204-amino-acid chain; its full sequence is Prephenate decarboxylase (204 aa).

It belongs to the prephenate decarboxylase family.

The protein localises to the cytoplasm. The catalysed reaction is prephenate + H(+) = 3-[(4R)-4-hydroxycyclohexa-1,5-dien-1-yl]-2-oxopropanoate + CO2. Its pathway is antibiotic biosynthesis; bacilysin biosynthesis. Its function is as follows. Part of the bacABCDEF operon responsible for the biosynthesis of the nonribosomally synthesized dipeptide antibiotic bacilysin, composed of L-alanine and L-anticapsin. Bacilysin is an irreversible inactivator of the glutaminase domain of glucosamine synthetase. BacA is an unusual prephenate decarboxylase that avoids the typical aromatization of the cyclohexadienol ring of prephenate. BacA catalyzes the protonation of prephenate (1-carboxy-4-hydroxy-alpha-oxo-2,5-cyclohexadiene-1-propanoic acid) at C6 position, followed by a decarboxylation to produce the endocyclic-delta(4),delta(8)-7R-dihydro-hydroxyphenylpyruvate (en-H2HPP). En-H2HPP is able to undergo a slow nonenzymatic isomerization to produce the exocyclic-delta(3),delta(5)-dihydro-hydroxyphenylpyruvate (ex-H2HPP). BacA isomerizes only the pro-R double bond in prephenate. This is Prephenate decarboxylase from Bacillus subtilis (strain 168).